The sequence spans 313 residues: MDQGFRQWLTTVFRDRVKWDEPMSRHTTLGVGGPADALVAPETVSELRELIGRCRAQNIAFMVLAGGSNLLVRDRGIRGIVIDMKKYWQTIERHSDRGSGARLTVGAGLTLAALCRYAADNGLAGMTFAVGIPGTVGGAVAMNAGTAEGWMGDVVEAVEMVTGDGRRIRKEKQDLVFSYRRFAVRNDDTATPGPPVITGVDLGLGFDDSEALKAAAEERRRRRTATQPAGFRSAGCFFKNPEAGDPAGKLIDRAGLKGLAVGGAVVSEAHGNFLVNRGNATAGDLLALMETVQRRVADRFGVTLEPEVTIVGQ.

Residues 31 to 207 enclose the FAD-binding PCMH-type domain; the sequence is VGGPADALVA…TGVDLGLGFD (177 aa). Residue Arg180 is part of the active site. The Proton donor role is filled by Cys236. Glu307 is a catalytic residue.

Belongs to the MurB family. The cofactor is FAD.

Its subcellular location is the cytoplasm. It catalyses the reaction UDP-N-acetyl-alpha-D-muramate + NADP(+) = UDP-N-acetyl-3-O-(1-carboxyvinyl)-alpha-D-glucosamine + NADPH + H(+). The protein operates within cell wall biogenesis; peptidoglycan biosynthesis. Functionally, cell wall formation. The polypeptide is UDP-N-acetylenolpyruvoylglucosamine reductase (Desulfosudis oleivorans (strain DSM 6200 / JCM 39069 / Hxd3) (Desulfococcus oleovorans)).